We begin with the raw amino-acid sequence, 176 residues long: Oxaleimides biosynthesis cluster protein N (176 aa).

4 helical membrane-spanning segments follow: residues 5-25 (LLVV…PLIT), 71-91 (VWTG…LNLF), 104-124 (FLYG…PKML), and 155-175 (FWIV…EGLK).

It localises to the membrane. The protein operates within secondary metabolite biosynthesis. Part of the gene cluster that mediates the biosynthesis of oxaleimides, cytotoxic compounds containing an unusual disubstituted succinimide moiety. The first step of the pathway is provided by the HR-PKS poxF that serves in a new mode of collaborative biosynthesis with the PKS-NRPS poxE, by providing the olefin containing amino acid substrate via the synthesis of an ACP-bound dec-4-enoate. The cytochrome P450 monooxygenase poxM-catalyzed oxidation at the alpha-position creates the enzyme-bound 2-hydroxydec-4-enoyl-ACP thioester, which may be prone to spontaneous hydrolysis to yield 2-hydroxydec-4-enoic acid due to increased electrophilicity of the carbonyl. 2-hydroxydec-4-enoic acid can then be further oxidized by poxM to yield the alpha-ketoacid 2-oxodec-4-enoicacid, which is reductively aminated by the aminotransferase poxL to yield (S,E)-2-aminodec-4-enoic acid. The Hybrid PKS-NRPS synthetase poxE then performs condensation between the octaketide product of its PKS modules and the amino group of (S,E)-2-aminodec-4-enoic acid which is activated and incorporated by the adenylation domain. The resulting aminoacyl product can be cyclized by the Diels-Alderase PoxQ and reductively released by the reductive (R) domain of poxE to yield an aldehyde intermediate. The released aldehyde is then substrate for a Knoevenagel condensation by the hydrolyase poxO followed by an oxidation at the 5-position of the pyrrolidone ring. The presence of the olefin from the amino acid building block allows for migration of the substituted allyl group to occur. This allylic transposition reaction takes place in a conjugate addition, semipinacol-like fashion to yield a succinimide intermediate. Iterative two-electron oxidations of the C7 methyl of the succinimide intermediate to the carboxylic acid can be catalyzed by one of two remaining cytochrome P450 monooxygenasess poxC or poxD to yield oxaleimide A. Subsequent oxidation yields the maleimide scaffold oxaleimide I. Both oxaleimide A and oxaleimide I can undergo oxidative modifications in the decalin ring to yield the series of products oxaleimides B to H. This Penicillium oxalicum (strain 114-2 / CGMCC 5302) (Penicillium decumbens) protein is Oxaleimides biosynthesis cluster protein N.